The following is a 261-amino-acid chain: Cytochrome c oxidase subunit 3 (261 aa).

Topologically, residues 1–15 (MTHQTHAYHMVNPSP) are mitochondrial matrix. A helical membrane pass occupies residues 16–34 (WPLTGALSALLMTSGLTMW). At 35–40 (FHFNSM) the chain is on the mitochondrial intermembrane side. Residues 41-66 (LLLSLGLLTNTLTMYQWWRDIIREST) traverse the membrane as a helical segment. Topologically, residues 67–72 (FQGHHT) are mitochondrial matrix. The helical transmembrane segment at 73-105 (SVVQKGLRYGMILFIISEVLFFTGFFWAFYHSS) threads the bilayer. Topologically, residues 106–128 (LAPTPELGGCWPPTGIHPLNPLE) are mitochondrial intermembrane. The chain crosses the membrane as a helical span at residues 129-152 (VPLLNTSILLASGVSITWAHHSLM). Topologically, residues 153-155 (EGD) are mitochondrial matrix. The chain crosses the membrane as a helical span at residues 156-183 (RKHMIQALSITIALGVYFTLLQASEYYE). Residues 184-190 (APFTISD) lie on the Mitochondrial intermembrane side of the membrane. A helical membrane pass occupies residues 191-223 (GVYGSTFFVATGFHGLHVIIGSTFLAVCLLRQL). Topologically, residues 224-232 (KFHFTSNHH) are mitochondrial matrix. The helical transmembrane segment at 233-256 (FGFEAAAWYWHFVDVVWLFLYVSI) threads the bilayer. The Mitochondrial intermembrane portion of the chain corresponds to 257–261 (YWWGS).

The protein belongs to the cytochrome c oxidase subunit 3 family. As to quaternary structure, component of the cytochrome c oxidase (complex IV, CIV), a multisubunit enzyme composed of 14 subunits. The complex is composed of a catalytic core of 3 subunits MT-CO1, MT-CO2 and MT-CO3, encoded in the mitochondrial DNA, and 11 supernumerary subunits COX4I, COX5A, COX5B, COX6A, COX6B, COX6C, COX7A, COX7B, COX7C, COX8 and NDUFA4, which are encoded in the nuclear genome. The complex exists as a monomer or a dimer and forms supercomplexes (SCs) in the inner mitochondrial membrane with NADH-ubiquinone oxidoreductase (complex I, CI) and ubiquinol-cytochrome c oxidoreductase (cytochrome b-c1 complex, complex III, CIII), resulting in different assemblies (supercomplex SCI(1)III(2)IV(1) and megacomplex MCI(2)III(2)IV(2)).

The protein resides in the mitochondrion inner membrane. It carries out the reaction 4 Fe(II)-[cytochrome c] + O2 + 8 H(+)(in) = 4 Fe(III)-[cytochrome c] + 2 H2O + 4 H(+)(out). Component of the cytochrome c oxidase, the last enzyme in the mitochondrial electron transport chain which drives oxidative phosphorylation. The respiratory chain contains 3 multisubunit complexes succinate dehydrogenase (complex II, CII), ubiquinol-cytochrome c oxidoreductase (cytochrome b-c1 complex, complex III, CIII) and cytochrome c oxidase (complex IV, CIV), that cooperate to transfer electrons derived from NADH and succinate to molecular oxygen, creating an electrochemical gradient over the inner membrane that drives transmembrane transport and the ATP synthase. Cytochrome c oxidase is the component of the respiratory chain that catalyzes the reduction of oxygen to water. Electrons originating from reduced cytochrome c in the intermembrane space (IMS) are transferred via the dinuclear copper A center (CU(A)) of subunit 2 and heme A of subunit 1 to the active site in subunit 1, a binuclear center (BNC) formed by heme A3 and copper B (CU(B)). The BNC reduces molecular oxygen to 2 water molecules using 4 electrons from cytochrome c in the IMS and 4 protons from the mitochondrial matrix. This chain is Cytochrome c oxidase subunit 3 (MT-CO3), found in Sus scrofa (Pig).